The primary structure comprises 453 residues: Chromosomal replication initiator protein DnaA (453 aa).

The domain I, interacts with DnaA modulators stretch occupies residues 1 to 74 (MKEKQFWNRI…GFEIYDAEIT (74 aa)). Residues 74–113 (TPHYIFTKPQDTTSSQVEEATNLTLYDYSPKLVSIPYSDT) form a domain II region. The interval 114–331 (GLKEKYTFDN…GAINDITLIA (218 aa)) is domain III, AAA+ region. Gly158, Gly160, Lys161, and Thr162 together coordinate ATP. Positions 332-453 (RVKKIKDITI…EIESIKKKIK (122 aa)) are domain IV, binds dsDNA.

This sequence belongs to the DnaA family. In terms of assembly, oligomerizes as a right-handed, spiral filament on DNA at oriC.

Its subcellular location is the cytoplasm. Its function is as follows. Plays an essential role in the initiation and regulation of chromosomal replication. ATP-DnaA binds to the origin of replication (oriC) to initiate formation of the DNA replication initiation complex once per cell cycle. Binds the DnaA box (a 9 base pair repeat at the origin) and separates the double-stranded (ds)DNA. Forms a right-handed helical filament on oriC DNA; dsDNA binds to the exterior of the filament while single-stranded (ss)DNA is stabiized in the filament's interior. The ATP-DnaA-oriC complex binds and stabilizes one strand of the AT-rich DNA unwinding element (DUE), permitting loading of DNA polymerase. After initiation quickly degrades to an ADP-DnaA complex that is not apt for DNA replication. Binds acidic phospholipids. This Streptococcus pneumoniae (strain Taiwan19F-14) protein is Chromosomal replication initiator protein DnaA.